The chain runs to 558 residues: Autophagy-related protein 18 (558 aa).

A WD 1 repeat occupies 4-42 (DYPPTINFINFNQTGSCISIATDDGFSIYNCDPFGKFYS). A disordered region spans residues 176–264 (SSSSSQVEPP…FQQTGITGSS (89 aa)). The span at 188-201 (PQQRSNFSGNTLET) shows a compositional bias: polar residues. The span at 210-252 (GSNNSNNGNNNNNNNNNNNNNNNNNNNNNNNNNNSNNEENSNS) shows a compositional bias: low complexity. The segment covering 253–264 (KSFQQTGITGSS) has biased composition (polar residues). 2 WD repeats span residues 290–330 (AHKG…KIYQ) and 335–374 (TYPT…ETSS). Positions 331–335 (FRRGT) match the L/FRRG motif motif. Residues 400 to 432 (SSESLTESQSKDPHVDTSRSTVGRMIRKSSQQL) form a disordered region.

This sequence belongs to the WD repeat PROPPIN family. In terms of assembly, component of the PI(3,5)P2 regulatory complex.

The protein resides in the preautophagosomal structure membrane. It is found in the vacuole membrane. The protein localises to the endosome membrane. In terms of biological role, the PI(3,5)P2 regulatory complex regulates both the synthesis and turnover of phosphatidylinositol 3,5-bisphosphate (PtdIns(3,5)P2). Necessary for proper vacuole morphology. Plays an important role in osmotically-induced vacuole fragmentation. Required for cytoplasm to vacuole transport (Cvt) vesicle formation, pexophagy and starvation-induced autophagy. Involved in correct ATG9 trafficking to the pre-autophagosomal structure. Might also be involved in premeiotic DNA replication. The protein is Autophagy-related protein 18 (ATG18) of Vanderwaltozyma polyspora (strain ATCC 22028 / DSM 70294 / BCRC 21397 / CBS 2163 / NBRC 10782 / NRRL Y-8283 / UCD 57-17) (Kluyveromyces polysporus).